Here is a 773-residue protein sequence, read N- to C-terminus: Angiomotin-like protein 2 (773 aa).

Disordered stretches follow at residues 41-157 (GGAG…HVRS), 169-238 (RNGA…SPHF), and 259-309 (QYQY…LAQM). Composition is skewed to basic and acidic residues over residues 80-91 (QGGETHLAENRL), 100-112 (KGEE…EAKA), and 141-152 (RRQDEALRELRH). The tract at residues 101–302 (GEELPTYEEA…GPPGAQATSG (202 aa)) is required for interaction with CDH5. Tyr-107 is modified (phosphotyrosine; by FGFR1). Residues 177-190 (HMSSSHSFPQLARS) show a composition bias toward polar residues. Over residues 196–213 (PRGPPAEGPEPRGPPPQY) the composition is skewed to pro residues. Positions 220-302 (QETAAVNDPR…GPPGAQATSG (83 aa)) are required for interaction with CDH1. Residues 304–577 (AHLAQMESVL…KYLEERAMRQ (274 aa)) are a coiled coil. Residues Lys-342 and Lys-403 each participate in a glycyl lysine isopeptide (Lys-Gly) (interchain with G-Cter in ubiquitin) cross-link. Disordered regions lie at residues 589–611 (QRDT…NEGL) and 677–754 (WQGF…TTSL). A compositionally biased stretch (pro residues) spans 701-710 (EEPPATPPLP). A compositionally biased stretch (polar residues) spans 719-734 (DGSTQTDGPADSTSAC). Phosphoserine is present on residues Ser-753 and Ser-756. The PDZ-binding motif lies at 770 to 773 (EILI).

It belongs to the angiomotin family. Part of a complex composed of AMOTL2, MAGI1 and CDH5, within the complex AMOTL2 acts as a scaffold protein for the interaction of MAGI1 with CDH5. The complex is required for coupling actin fibers to cell junctions in endothelial cells. Within the complex AMOTL2 (via its N-terminus) interacts with CDH5. Interacts (via N-terminus) with MAGI1. Interacts (via N-terminus) with ACTB; the interaction facilitates binding of cell junction complexes to actin fibers in endothelial cells. Interacts with CDH1; the interaction may facilitate binding of radial actin fibers to cell junction complexes. Interacts with SRC. Interacts with YAP1; the interaction is required for ubiquitination of AMOTL2 and localization of YAP1 to tight junctions. Interacts with WWP1; the interaction facilitates WWP1 interaction with the Crumbs complex and subsequent WWP1 translocation to the plasma membrane. WWP1 interaction with the Crumbs complex promotes WWP1 monoubiquitination of AMOTL2 which subsequently activates the Hippo signaling pathway. When ubiquitinated interacts with LATS2 (via UBA domain); the interaction promotes LATS2 phosphorylation of YAP1. Interacts (via PPXY motif) with WWTR1/TAZ (via WW domain); the interaction promotes WWTR1/TAZ localization to the cytoplasm and thereby inhibition of its transcriptional properties. Interacts with PHLDB2; interaction may facilitate PHLDB2 localization to the myotube podosome cortex that surrounds the core. Monoubiquitinated at Lys-342 and Lys-403 by Crumbs complex-bound WWP1. De-ubiquitinated at Lys-342 and Lys-403 by USP9X; the interaction may be promoted by cell contact inhibition. Deubiquitination of AMOTL2 negatively regulates Hippo signaling activation. Post-translationally, phosphorylation at Tyr-107 is necessary for efficient binding to SRC and synergistically functioning with SRC to activate the downstream MAPK pathway.

Its subcellular location is the recycling endosome. The protein resides in the cytoplasm. It is found in the cell projection. The protein localises to the podosome. It localises to the cell junction. Functionally, regulates the translocation of phosphorylated SRC to peripheral cell-matrix adhesion sites. Required for proper architecture of actin filaments. Plays a role in coupling actin fibers to cell junctions in endothelial cells and is therefore required for correct endothelial cell morphology via facilitating transcellular transmission of mechanical force resulting in endothelial cell elongation. Required for the anchoring of radial actin fibers to CDH1 junction complexes at the cell membrane which facilitates organization of radial actin fiber structure and cellular response to contractile forces. This contributes to maintenance of cell area, size, shape, epithelial sheet organization and trophectoderm cell properties that facilitate blastocyst zona hatching. Inhibits the Wnt/beta-catenin signaling pathway, probably by recruiting CTNNB1 to recycling endosomes and hence preventing its translocation to the nucleus. Participates in angiogenesis. Activates the Hippo signaling pathway in response to cell contact inhibition via interaction with and ubiquitination by Crumbs complex-bound WWP1. Ubiquitinated AMOTL2 then interacts with LATS2 which in turn phosphorylates YAP1, excluding it from the nucleus and localizing it to the cytoplasm and tight junctions, therefore ultimately repressing YAP1-driven transcription of target genes. Acts to inhibit WWTR1/TAZ transcriptional coactivator activity via sequestering WWTR1/TAZ in the cytoplasm and at tight junctions. Regulates the size and protein composition of the podosome cortex and core at myofibril neuromuscular junctions. Selectively promotes FGF-induced MAPK activation through SRC. May play a role in the polarity, proliferation and migration of endothelial cells. The polypeptide is Angiomotin-like protein 2 (Rattus norvegicus (Rat)).